The chain runs to 271 residues: Thiazole synthase (271 aa).

Lys104 functions as the Schiff-base intermediate with DXP in the catalytic mechanism. 1-deoxy-D-xylulose 5-phosphate contacts are provided by residues Gly165, Ala192–Gly193, and Asn214–Thr215.

Belongs to the ThiG family. Homotetramer. Forms heterodimers with either ThiH or ThiS.

It is found in the cytoplasm. The catalysed reaction is [ThiS sulfur-carrier protein]-C-terminal-Gly-aminoethanethioate + 2-iminoacetate + 1-deoxy-D-xylulose 5-phosphate = [ThiS sulfur-carrier protein]-C-terminal Gly-Gly + 2-[(2R,5Z)-2-carboxy-4-methylthiazol-5(2H)-ylidene]ethyl phosphate + 2 H2O + H(+). Its pathway is cofactor biosynthesis; thiamine diphosphate biosynthesis. Catalyzes the rearrangement of 1-deoxy-D-xylulose 5-phosphate (DXP) to produce the thiazole phosphate moiety of thiamine. Sulfur is provided by the thiocarboxylate moiety of the carrier protein ThiS. In vitro, sulfur can be provided by H(2)S. The protein is Thiazole synthase of Burkholderia lata (strain ATCC 17760 / DSM 23089 / LMG 22485 / NCIMB 9086 / R18194 / 383).